The chain runs to 314 residues: MDNSNWTSVSHFVLLGISTHPEEQIPLFLVFSLMYAINISGNLAIITLILSAPRLHIPMYIFLSNLALTDICFTSTTVPKMLQIIFSPTKVISYTGCLAQTYFFICFAVMENFILAVMAYDRYIAICHPFHYTMILTRMLCVKMVVMCHALSHLHAMLHTFLIGQLIFCADNRIPHFFCDLYALMKISCTSTYLNTLMIHTEGAVVISGALAFITASYACIILVVLRIPSAKGRWKTFSTCGSHLTVVAIFYGTLSWVYFRPLSSYSVTKGRIITVVYTVVTPMLNPFIYSLRNGDVKGGFMKWMSRMQTFFFR.

Over 1–25 (MDNSNWTSVSHFVLLGISTHPEEQI) the chain is Extracellular. N-linked (GlcNAc...) asparagine glycosylation is present at N5. Residues 26-49 (PLFLVFSLMYAINISGNLAIITLI) form a helical membrane-spanning segment. Topologically, residues 50–57 (LSAPRLHI) are cytoplasmic. A helical membrane pass occupies residues 58–79 (PMYIFLSNLALTDICFTSTTVP). Residues 80–100 (KMLQIIFSPTKVISYTGCLAQ) lie on the Extracellular side of the membrane. C97 and C189 are oxidised to a cystine. A helical membrane pass occupies residues 101–120 (TYFFICFAVMENFILAVMAY). Over 121–139 (DRYIAICHPFHYTMILTRM) the chain is Cytoplasmic. Residues 140-158 (LCVKMVVMCHALSHLHAML) traverse the membrane as a helical segment. The Extracellular portion of the chain corresponds to 159–195 (HTFLIGQLIFCADNRIPHFFCDLYALMKISCTSTYLN). Residues 196-219 (TLMIHTEGAVVISGALAFITASYA) form a helical membrane-spanning segment. Residues 220–236 (CIILVVLRIPSAKGRWK) are Cytoplasmic-facing. The chain crosses the membrane as a helical span at residues 237 to 259 (TFSTCGSHLTVVAIFYGTLSWVY). Topologically, residues 260–272 (FRPLSSYSVTKGR) are extracellular. Residues 273-292 (IITVVYTVVTPMLNPFIYSL) traverse the membrane as a helical segment. Residues 293-314 (RNGDVKGGFMKWMSRMQTFFFR) are Cytoplasmic-facing.

The protein belongs to the G-protein coupled receptor 1 family.

It localises to the cell membrane. Its function is as follows. Odorant receptor. The protein is Olfactory receptor 1Q1 (OR1Q1) of Homo sapiens (Human).